The following is a 742-amino-acid chain: Tegument protein UL47 (742 aa).

The span at 1–10 shows a compositional bias: basic and acidic residues; it reads MDAARDGRPE. Disordered regions lie at residues 1–128 and 155–199; these read MDAA…TAHL and EFPP…DDAA. The Nuclear localization signal motif lies at 10–30; it reads ERRPRRSGTYRTHPFQRPSAR. The span at 18–37 shows a compositional bias: low complexity; the sequence is TYRTHPFQRPSARRSLLDAL. Residues 38–62 are compositionally biased toward basic and acidic residues; that stretch reads RAADAEAAERPRVRRPRPDFQRPPD. The span at 63–88 shows a compositional bias: acidic residues; sequence EDTSEDENVYDYIDGDSSDSADDYDS. A Nuclear export signal motif is present at residues 95 to 122; it reads RGPNHGAGDAMDTDAPPERAPEGGAPQD. The Nuclear export signal motif lies at 485–495; it reads LSAYLTLFVAL.

Belongs to the alphaherpesvirinae HHV-1 UL47 family. In terms of assembly, interacts with US3 kinase. Interacts with UL31 and UL34; these interactions seem important for efficient virion nuclear egress. Interacts with UL41/VHS. Phosphorylated by US3. This phosphorylation is required for proper nuclear localization.

It localises to the virion tegument. Its subcellular location is the host nucleus. The protein localises to the host cytoplasm. Tegument protein that can bind to various RNA transcripts. Plays a role in the attenuation of selective viral and cellular mRNA degradation by modulating the activity of host shutoff RNase UL41/VHS. Also plays a role in the primary envelopment of virions in the perinuclear space, probably by interacting with two nuclear egress proteins UL31 and UL34. The polypeptide is Tegument protein UL47 (Bos taurus (Bovine)).